The sequence spans 141 residues: Hemoglobin subunit alpha-2 (141 aa).

The Globin domain maps to 1 to 141 (VLSPADKNNV…VSTVLTSKYR (141 aa)). Position 58 (histidine 58) interacts with O2. Histidine 87 contributes to the heme b binding site.

The protein belongs to the globin family. As to quaternary structure, heterotetramer of two alpha chains and two beta chains. As to expression, red blood cells.

Involved in oxygen transport from the lung to the various peripheral tissues. The protein is Hemoglobin subunit alpha-2 of Varecia variegata (Black-and-white ruffed lemur).